Consider the following 205-residue polypeptide: Recombination protein RecR (205 aa).

The segment at 60–75 (CKVCHNISDTETCQIC) adopts a C4-type zinc-finger fold. One can recognise a Toprim domain in the interval 83–178 (SMVCVVENIR…KLSVLARGVS (96 aa)).

The protein belongs to the RecR family.

In terms of biological role, may play a role in DNA repair. It seems to be involved in an RecBC-independent recombinational process of DNA repair. It may act with RecF and RecO. This chain is Recombination protein RecR, found in Bacteroides fragilis (strain ATCC 25285 / DSM 2151 / CCUG 4856 / JCM 11019 / LMG 10263 / NCTC 9343 / Onslow / VPI 2553 / EN-2).